The primary structure comprises 156 residues: FAD synthase (156 aa).

Residues 16–17 (TF), 21–24 (HPGH), Asp101, and Tyr129 contribute to the ATP site.

Belongs to the archaeal FAD synthase family. In terms of assembly, homodimer. It depends on a divalent metal cation as a cofactor.

The enzyme catalyses FMN + ATP + H(+) = FAD + diphosphate. It participates in cofactor biosynthesis; FAD biosynthesis; FAD from FMN: step 1/1. Functionally, catalyzes the transfer of the AMP portion of ATP to flavin mononucleotide (FMN) to produce flavin adenine dinucleotide (FAD) coenzyme. The protein is FAD synthase of Methanococcus aeolicus (strain ATCC BAA-1280 / DSM 17508 / OCM 812 / Nankai-3).